A 1253-amino-acid polypeptide reads, in one-letter code: Cytoplasmic FMR1-interacting protein 1 (1253 aa).

At Ser583 the chain carries Phosphoserine. The segment at 724–732 (DKRLRSECK) is EIF4E-binding. Thr1234 carries the phosphothreonine modification.

It belongs to the CYFIP family. Component of the WAVE1 complex composed of ABI2, CYFIP1 or CYFIP2, BRK1, NCKAP1 and WASF1/WAVE1. Within the complex, a heterodimer containing NCKAP1 and CYFIP1 interacts with a heterotrimer formed by WAVE1, ABI2 and BRK1. Component of the CYFIP1-EIF4E-FMR1 complex which is composed of CYFIP, EIF4E and FMR1. Interacts with FMR1 but does not bind to related proteins FXR1 or FXR2. Interaction with EIF4E stimulates FMR1 binding. Component of the WAVE2 complex composed of ABI1, CYFIP1/SRA1, NCKAP1/NAP1 (NCKAP1L/HEM1 in hematopoietic cells) and WASF2/WAVE2. Interacts with the active GTP-bound form of RAC1. Interacts through its C-terminus with the C-terminus of DPYSL2/CRMP2 which is necessary for DPYSL2-induced axon outgrowth. Interacts with NYAP1, NYAP2 and MYO16. Interacts with TMEM108 (via N-terminus); the interaction associates TMEM108 with the WAVE1 complex. In terms of tissue distribution, highly expressed in embryonic and adult developing nervous system.

Its subcellular location is the cytoplasm. It localises to the perinuclear region. The protein resides in the cell projection. The protein localises to the lamellipodium. It is found in the ruffle. Its subcellular location is the synapse. It localises to the synaptosome. Its function is as follows. Component of the CYFIP1-EIF4E-FMR1 complex which binds to the mRNA cap and mediates translational repression. In the CYFIP1-EIF4E-FMR1 complex this subunit is an adapter between EIF4E and FMR1. Promotes the translation repression activity of FMR1 in brain probably by mediating its association with EIF4E and mRNA. Regulates formation of membrane ruffles and lamellipodia. Plays a role in axon outgrowth. Binds to F-actin but not to RNA. Part of the WAVE complex that regulates actin filament reorganization via its interaction with the Arp2/3 complex. Actin remodeling activity is regulated by RAC1. Regulator of epithelial morphogenesis. May act as an invasion suppressor in cancers. As component of the WAVE1 complex, required for BDNF-NTRK2 endocytic trafficking and signaling from early endosomes. This chain is Cytoplasmic FMR1-interacting protein 1, found in Mus musculus (Mouse).